Here is a 535-residue protein sequence, read N- to C-terminus: Dimethylaniline monooxygenase [N-oxide-forming] 2 (535 aa).

Residues 9 to 13, Glu32, 40 to 41, and 61 to 62 each bind FAD; these read GAGVS, LW, and NT. NADP(+)-binding positions include 60–61 and 195–198; these read TN and SAAD. Lys492 participates in a covalent cross-link: Glycyl lysine isopeptide (Lys-Gly) (interchain with G-Cter in SUMO). Residues 510-530 traverse the membrane as a helical segment; that stretch reads APVSFLIKVLGLLAIVLAFFF.

Belongs to the FMO family. It depends on FAD as a cofactor. The cofactor is Mg(2+).

It localises to the microsome membrane. The protein resides in the endoplasmic reticulum membrane. Catalyzes the oxidative metabolism of numerous xenobiotics, including mainly therapeutic drugs and insecticides that contain a soft nucleophile, most commonly nitrogen and sulfur and participates to their bioactivation. The chain is Dimethylaniline monooxygenase [N-oxide-forming] 2 from Rattus norvegicus (Rat).